The sequence spans 101 residues: STAS-domain containing protein PA14_20770 (101 aa).

The 88-residue stretch at 14-101 (LTIQIQGRFD…SNFEQLFKIS (88 aa)) folds into the STAS domain.

Post-translationally, phosphorylated on a serine residue, possibly on Ser-56.

The protein resides in the secreted. This is STAS-domain containing protein PA14_20770 from Pseudomonas aeruginosa (strain UCBPP-PA14).